A 143-amino-acid polypeptide reads, in one-letter code: Transcriptional regulator MraZ (143 aa).

SpoVT-AbrB domains are found at residues 5 to 47 (THTP…PMQE) and 76 to 119 (ASSE…DLRT).

Belongs to the MraZ family. Forms oligomers.

It is found in the cytoplasm. It localises to the nucleoid. This is Transcriptional regulator MraZ from Kineococcus radiotolerans (strain ATCC BAA-149 / DSM 14245 / SRS30216).